Consider the following 550-residue polypeptide: Forkhead box protein N4 (550 aa).

Positions 231-327 (KPIYSYSCLI…EEMQKWKRKD (97 aa)) form a DNA-binding region, fork-head. Positions 402 to 411 (LQNQSRLAPS) are enriched in low complexity. The disordered stretch occupies residues 402–437 (LQNQSRLAPSSPAPAQTPPLHTVPDMTNSSLPQHPA).

In terms of tissue distribution, isoform 1 is expressed mainly in adult thymus. Isoform 2 is detected in adult skin. Isoform 3 is expressed in adult brain and embryo. Prominent expression sites include the olfactory placode, the basal layer of the olfactory epithelium, the neuroepithelium of the developing retina, the germinal zone of the differentiated eye, regions of motoneuron development in the neural tube and periventricular regions of the brain.

The protein resides in the nucleus. Its function is as follows. Transcription factor essential for neural and some non-neural tissues development. Binds to an 11-bp consensus sequence containing the invariant tetranucleotide 5'-ACGC-3'. During development of the central nervous system, required to specify the amacrine and horizontal cell fates from multipotent retinal progenitors while suppressing the alternative photoreceptor cell fates. Drives commitment of p2 progenitors to the V2b interneuron fates during spinal cord neurogenesis. In development of non-neural tissues, plays an essential role in the specification of the atrioventricular canal. This Danio rerio (Zebrafish) protein is Forkhead box protein N4 (foxn4).